The sequence spans 591 residues: ATP-dependent lipid A-core flippase (591 aa).

5 helical membrane-spanning segments follow: residues 34-54 (LILA…LAVI), 71-91 (IWSV…CNFF), 158-178 (LVVI…TVII), 258-278 (LTPL…AVAL), and 285-305 (TLTA…FDPI). The region spanning 35-317 (ILAVLLMAGA…LTNLASKMQK (283 aa)) is the ABC transmembrane type-1 domain. Residues 350-586 (IEFRQIGHRF…GGLYATLYNM (237 aa)) form the ABC transporter domain. An ATP-binding site is contributed by 384-391 (GRSGSGKT).

The protein belongs to the ABC transporter superfamily. Lipid exporter (TC 3.A.1.106) family. As to quaternary structure, homodimer.

It localises to the cell inner membrane. The catalysed reaction is ATP + H2O + lipid A-core oligosaccharideSide 1 = ADP + phosphate + lipid A-core oligosaccharideSide 2.. In terms of biological role, involved in lipopolysaccharide (LPS) biosynthesis. Translocates lipid A-core from the inner to the outer leaflet of the inner membrane. Transmembrane domains (TMD) form a pore in the inner membrane and the ATP-binding domain (NBD) is responsible for energy generation. This chain is ATP-dependent lipid A-core flippase, found in Bordetella avium (strain 197N).